We begin with the raw amino-acid sequence, 190 residues long: uncharacterized protein (190 aa).

This sequence to E.coli YdjR.

This is an uncharacterized protein from Pseudomonas putida (Arthrobacter siderocapsulatus).